The sequence spans 196 residues: ATP-dependent Clp protease proteolytic subunit (196 aa).

Residue Ser98 is the Nucleophile of the active site. His123 is an active-site residue.

The protein belongs to the peptidase S14 family. As to quaternary structure, fourteen ClpP subunits assemble into 2 heptameric rings which stack back to back to give a disk-like structure with a central cavity, resembling the structure of eukaryotic proteasomes.

The protein localises to the cytoplasm. The enzyme catalyses Hydrolysis of proteins to small peptides in the presence of ATP and magnesium. alpha-casein is the usual test substrate. In the absence of ATP, only oligopeptides shorter than five residues are hydrolyzed (such as succinyl-Leu-Tyr-|-NHMec, and Leu-Tyr-Leu-|-Tyr-Trp, in which cleavage of the -Tyr-|-Leu- and -Tyr-|-Trp bonds also occurs).. In terms of biological role, cleaves peptides in various proteins in a process that requires ATP hydrolysis. Has a chymotrypsin-like activity. Plays a major role in the degradation of misfolded proteins. This is ATP-dependent Clp protease proteolytic subunit from Lactiplantibacillus plantarum (strain ATCC BAA-793 / NCIMB 8826 / WCFS1) (Lactobacillus plantarum).